The following is a 127-amino-acid chain: Major sperm protein isoform alpha (127 aa).

At alanine 2 the chain carries N-acetylalanine. The MSP domain maps to 9 to 126 (DINTQPSQKI…RRKNLPIEYN (118 aa)).

As to quaternary structure, forms filaments 10 nm wide, with a characteristic substructure repeating axially at 9 nm. Sperm.

It is found in the cell projection. The protein resides in the pseudopodium. Its subcellular location is the cytoplasm. It localises to the cytoskeleton. In terms of biological role, central component in molecular interactions underlying sperm crawling. Forms an extensive filament system that extends from sperm villipoda, along the leading edge of the pseudopod. The chain is Major sperm protein isoform alpha from Ascaris suum (Pig roundworm).